The primary structure comprises 602 residues: Elongation factor 4 (602 aa).

A tr-type G domain is found at 7-189; sequence KYIRNFSIVA…AIVNKVPAPD (183 aa). GTP is bound by residues 19–24 and 136–139; these read DHGKST and NKID.

This sequence belongs to the TRAFAC class translation factor GTPase superfamily. Classic translation factor GTPase family. LepA subfamily.

It is found in the cell membrane. The enzyme catalyses GTP + H2O = GDP + phosphate + H(+). Required for accurate and efficient protein synthesis under certain stress conditions. May act as a fidelity factor of the translation reaction, by catalyzing a one-codon backward translocation of tRNAs on improperly translocated ribosomes. Back-translocation proceeds from a post-translocation (POST) complex to a pre-translocation (PRE) complex, thus giving elongation factor G a second chance to translocate the tRNAs correctly. Binds to ribosomes in a GTP-dependent manner. The protein is Elongation factor 4 of Clostridium botulinum (strain Kyoto / Type A2).